Reading from the N-terminus, the 664-residue chain is MKRRNADCSKLRRPLKRNRITEGIYGSTFLYLKFLVVWALVLLADFVLEFRFEYLWPFWLFIRSVYDSFRYQGLAFSVFFVCVAFTSNIICLLFIPIQWLFFAASTYVWVQYVWHTERGVCLPTVSLWILFVYIEAAIRFKDLKNFHVDLCRPFAAHCIGYPVVTLGFGFKSYVSYKMRLRKQKEVQKENEFYMQLLQQALPPEQQMLQKQEKEAEEAAKGLPDMDSSILIHHNGGIPANKKLSTTLPEIEYREKGKEKDKDAKKHNLGINNNNILQPVDSKIQEIEYMENHINSKRLNNDLVGSTENLLKEDSCTASSKNYKNASGVVNSSPRSHSATNGSIPSSSSKNEKKQKCTSKSPSAHKDLMENCIPNNQLSKPDALVRLEQDIKKLKADLQASRQVEQELRSQISSLSSTERGIRSEMGQLRQENELLQNKLHNAVQMKQKDKQNISQLEKKLKAEQEARSFVEKQLMEEKKRKKLEEATAARAVAFAAASRGECTETLRNRIRELEAEGKKLTMDMKVKEDQIRELELKVQELRKYKENEKDTEVLMSALSAMQDKTQHLENSLSAETRIKLDLFSALGDAKRQLEIAQGQILQKDQEIKDLKQKIAEVMAVMPSITYSAATSPLSPVSPHYSSKFVETSPSGLDPNASVYQPLKK.

4 helical membrane passes run T28–L48, A75–I95, V120–F140, and F154–V174. Residues R253–K265 are compositionally biased toward basic and acidic residues. Residues R253–N274 are disordered. Residue S305 is modified to Phosphoserine. The segment covering K320–S348 has biased composition (polar residues). Residues K320 to L367 form a disordered region. N324 carries an N-linked (GlcNAc...) asparagine glycan. S332 is modified (phosphoserine). N340 and N452 each carry an N-linked (GlcNAc...) asparagine glycan. Residues T630–K664 form a disordered region. Phosphoserine occurs at positions 631 and 634. A glycan (N-linked (GlcNAc...) asparagine) is linked at N655.

Belongs to the macoilin family.

The protein resides in the rough endoplasmic reticulum membrane. It localises to the nucleus membrane. Functionally, plays a role in the regulation of neuronal activity. This Sus scrofa (Pig) protein is Macoilin (MACO1).